A 421-amino-acid chain; its full sequence is Ribulose bisphosphate carboxylase large chain (421 aa).

Substrate-binding residues include Asn68 and Thr118. Residue Lys120 is the Proton acceptor of the active site. Lys122 lines the substrate pocket. 3 residues coordinate Mg(2+): Lys146, Asp148, and Glu149. Position 146 is an N6-carboxylysine (Lys146). Catalysis depends on His239, which acts as the Proton acceptor. Positions 240, 272, and 324 each coordinate substrate.

It belongs to the RuBisCO large chain family. Type I subfamily. Heterohexadecamer of 8 large chains and 8 small chains; disulfide-linked. The disulfide link is formed within the large subunit homodimers. The cofactor is Mg(2+). The disulfide bond which can form in the large chain dimeric partners within the hexadecamer appears to be associated with oxidative stress and protein turnover.

The protein localises to the plastid. Its subcellular location is the chloroplast. It carries out the reaction 2 (2R)-3-phosphoglycerate + 2 H(+) = D-ribulose 1,5-bisphosphate + CO2 + H2O. The enzyme catalyses D-ribulose 1,5-bisphosphate + O2 = 2-phosphoglycolate + (2R)-3-phosphoglycerate + 2 H(+). In terms of biological role, ruBisCO catalyzes two reactions: the carboxylation of D-ribulose 1,5-bisphosphate, the primary event in carbon dioxide fixation, as well as the oxidative fragmentation of the pentose substrate in the photorespiration process. Both reactions occur simultaneously and in competition at the same active site. The polypeptide is Ribulose bisphosphate carboxylase large chain (rbcL) (Aegilops crassa (Persian goatgrass)).